Consider the following 149-residue polypeptide: SsrA-binding protein (149 aa).

The protein belongs to the SmpB family.

Its subcellular location is the cytoplasm. Its function is as follows. Required for rescue of stalled ribosomes mediated by trans-translation. Binds to transfer-messenger RNA (tmRNA), required for stable association of tmRNA with ribosomes. tmRNA and SmpB together mimic tRNA shape, replacing the anticodon stem-loop with SmpB. tmRNA is encoded by the ssrA gene; the 2 termini fold to resemble tRNA(Ala) and it encodes a 'tag peptide', a short internal open reading frame. During trans-translation Ala-aminoacylated tmRNA acts like a tRNA, entering the A-site of stalled ribosomes, displacing the stalled mRNA. The ribosome then switches to translate the ORF on the tmRNA; the nascent peptide is terminated with the 'tag peptide' encoded by the tmRNA and targeted for degradation. The ribosome is freed to recommence translation, which seems to be the essential function of trans-translation. This is SsrA-binding protein from Anaplasma marginale (strain St. Maries).